The following is a 602-amino-acid chain: DNA mismatch repair protein MutL (602 aa).

It belongs to the DNA mismatch repair MutL/HexB family.

Functionally, this protein is involved in the repair of mismatches in DNA. It is required for dam-dependent methyl-directed DNA mismatch repair. May act as a 'molecular matchmaker', a protein that promotes the formation of a stable complex between two or more DNA-binding proteins in an ATP-dependent manner without itself being part of a final effector complex. The chain is DNA mismatch repair protein MutL from Baumannia cicadellinicola subsp. Homalodisca coagulata.